The chain runs to 222 residues: Chromatin-associated protein SWI6 (222 aa).

Positions Met-1 to Leu-15 are enriched in basic and acidic residues. Disordered regions lie at residues Met-1 to Asp-26 and Glu-77 to Tyr-147. Over residues Glu-16 to Asp-26 the composition is skewed to acidic residues. Positions Tyr-28–Arg-87 constitute a Chromo domain.

As to quaternary structure, interacts with DMT5.

The protein resides in the nucleus. Functionally, recognizes and binds histone H3 tails methylated at 'Lys-9', leading to epigenetic repression. Localizes DMT5 to heterochromatin characterized by trimethylation of histone H3 tails at 'Lys-9'. This chain is Chromatin-associated protein SWI6, found in Cryptococcus neoformans var. grubii serotype A (strain H99 / ATCC 208821 / CBS 10515 / FGSC 9487) (Filobasidiella neoformans var. grubii).